Consider the following 356-residue polypeptide: 3,4-dihydroxy-2-butanone 4-phosphate synthase (356 aa).

Residues 1 to 211 (MNAILSDQKT…ISDIVEYRMM (211 aa)) form a DHBP synthase region. D-ribulose 5-phosphate is bound by residues 38-39 (RE), Asp43, 150-154 (RIGHT), and Glu174. Residue Glu39 participates in Mg(2+) binding. Position 153 (His153) interacts with Mg(2+). Residues 212-356 (NESLIRVIAE…KSTNVNETVA (145 aa)) are GTP cyclohydrolase II-like.

This sequence in the N-terminal section; belongs to the DHBP synthase family. The protein in the C-terminal section; belongs to the GTP cyclohydrolase II family. Mg(2+) serves as cofactor. It depends on Mn(2+) as a cofactor.

The enzyme catalyses D-ribulose 5-phosphate = (2S)-2-hydroxy-3-oxobutyl phosphate + formate + H(+). It functions in the pathway cofactor biosynthesis; riboflavin biosynthesis; 2-hydroxy-3-oxobutyl phosphate from D-ribulose 5-phosphate: step 1/1. In terms of biological role, catalyzes the conversion of D-ribulose 5-phosphate to formate and 3,4-dihydroxy-2-butanone 4-phosphate. The sequence is that of 3,4-dihydroxy-2-butanone 4-phosphate synthase (ribB) from Sulfurospirillum multivorans (Dehalospirillum multivorans).